The chain runs to 141 residues: ATP synthase F(0) complex subunit C3, mitochondrial (141 aa).

A mitochondrion-targeting transit peptide spans 1 to 66 (MFACAKLART…REFQTSVISR (66 aa)). A helical transmembrane segment spans residues 82-102 (VGVAGSGAGIGTVFGSLIIGY). Lys-109 bears the N6,N6,N6-trimethyllysine mark. A helical membrane pass occupies residues 117-137 (ILGFALSEAMGLFCLMVAFLI).

It belongs to the ATPase C chain family. In terms of assembly, F-type ATPases have 2 components, CF(1) - the catalytic core - and CF(0) - the membrane proton channel. CF(1) has five subunits: alpha(3), beta(3), gamma(1), delta(1), epsilon(1). CF(0) has three main subunits: a, b and c. Interacts with TMEM70 and TMEM242. Trimethylated by ATPSCKMT at Lys-109. Methylation is required for proper incorporation of the C subunit into the ATP synthase complex and mitochondrial respiration.

It is found in the mitochondrion membrane. Mitochondrial membrane ATP synthase (F(1)F(0) ATP synthase or Complex V) produces ATP from ADP in the presence of a proton gradient across the membrane which is generated by electron transport complexes of the respiratory chain. F-type ATPases consist of two structural domains, F(1) - containing the extramembraneous catalytic core and F(0) - containing the membrane proton channel, linked together by a central stalk and a peripheral stalk. During catalysis, ATP synthesis in the catalytic domain of F(1) is coupled via a rotary mechanism of the central stalk subunits to proton translocation. Part of the complex F(0) domain. A homomeric c-ring of probably 10 subunits is part of the complex rotary element. This is ATP synthase F(0) complex subunit C3, mitochondrial from Mus musculus (Mouse).